The chain runs to 447 residues: Argininosuccinate lyase (447 aa).

It belongs to the lyase 1 family. Argininosuccinate lyase subfamily.

The protein localises to the cytoplasm. The enzyme catalyses 2-(N(omega)-L-arginino)succinate = fumarate + L-arginine. It participates in amino-acid biosynthesis; L-arginine biosynthesis; L-arginine from L-ornithine and carbamoyl phosphate: step 3/3. The protein is Argininosuccinate lyase of Bacteroides fragilis (strain ATCC 25285 / DSM 2151 / CCUG 4856 / JCM 11019 / LMG 10263 / NCTC 9343 / Onslow / VPI 2553 / EN-2).